Here is a 513-residue protein sequence, read N- to C-terminus: ATP synthase subunit alpha (513 aa).

Residue 169–176 (GDRQTGKT) coordinates ATP.

This sequence belongs to the ATPase alpha/beta chains family. In terms of assembly, F-type ATPases have 2 components, CF(1) - the catalytic core - and CF(0) - the membrane proton channel. CF(1) has five subunits: alpha(3), beta(3), gamma(1), delta(1), epsilon(1). CF(0) has three main subunits: a(1), b(2) and c(9-12). The alpha and beta chains form an alternating ring which encloses part of the gamma chain. CF(1) is attached to CF(0) by a central stalk formed by the gamma and epsilon chains, while a peripheral stalk is formed by the delta and b chains.

The protein resides in the cell inner membrane. The enzyme catalyses ATP + H2O + 4 H(+)(in) = ADP + phosphate + 5 H(+)(out). Produces ATP from ADP in the presence of a proton gradient across the membrane. The alpha chain is a regulatory subunit. The sequence is that of ATP synthase subunit alpha from Haemophilus influenzae (strain PittEE).